Here is an 87-residue protein sequence, read N- to C-terminus: UPF0237 protein YjhC (87 aa).

An ACT domain is found at 4–76 (VVTVVGADKI…EALGVNIHVQ (73 aa)).

This sequence belongs to the UPF0237 family.

This Lactococcus lactis subsp. lactis (strain IL1403) (Streptococcus lactis) protein is UPF0237 protein YjhC (yjhC).